We begin with the raw amino-acid sequence, 446 residues long: WEB family protein At3g56270 (446 aa).

Residues 313 to 349 are a coiled coil; sequence TNVSRIEILRKLEEANEEVKQSKQALEVALNRVEIAS.

It belongs to the WEB family.

The polypeptide is WEB family protein At3g56270 (Arabidopsis thaliana (Mouse-ear cress)).